We begin with the raw amino-acid sequence, 503 residues long: ATP synthase subunit alpha (503 aa).

Residue 170-177 (GDKQTGKT) coordinates ATP.

It belongs to the ATPase alpha/beta chains family. As to quaternary structure, F-type ATPases have 2 components, CF(1) - the catalytic core - and CF(0) - the membrane proton channel. CF(1) has five subunits: alpha(3), beta(3), gamma(1), delta(1), epsilon(1). CF(0) has three main subunits: a(1), b(2) and c(9-12). The alpha and beta chains form an alternating ring which encloses part of the gamma chain. CF(1) is attached to CF(0) by a central stalk formed by the gamma and epsilon chains, while a peripheral stalk is formed by the delta and b chains.

The protein resides in the cell inner membrane. The catalysed reaction is ATP + H2O + 4 H(+)(in) = ADP + phosphate + 5 H(+)(out). Functionally, produces ATP from ADP in the presence of a proton gradient across the membrane. The alpha chain is a regulatory subunit. This is ATP synthase subunit alpha from Helicobacter pylori (strain J99 / ATCC 700824) (Campylobacter pylori J99).